The chain runs to 401 residues: Riboflavin biosynthesis protein RibBA (401 aa).

Residues Met-1–Lys-203 are DHBP synthase. D-ribulose 5-phosphate contacts are provided by residues Arg-30–Glu-31, Asp-35, Arg-142–Thr-146, and Glu-166. Glu-31 is a binding site for Mg(2+). His-145 lines the Mg(2+) pocket. A GTP cyclohydrolase II region spans residues His-204–Phe-401. Arg-254–Glu-258 contributes to the GTP binding site. Zn(2+) is bound by residues Cys-259, Cys-270, and Cys-272. Residues Gln-275, Glu-297–Arg-299, and Thr-319 contribute to the GTP site. The active-site Proton acceptor; for GTP cyclohydrolase activity is Asp-331. The Nucleophile; for GTP cyclohydrolase activity role is filled by Arg-333. Residues Thr-354 and Lys-359 each contribute to the GTP site.

In the N-terminal section; belongs to the DHBP synthase family. It in the C-terminal section; belongs to the GTP cyclohydrolase II family. Mg(2+) is required as a cofactor. Mn(2+) serves as cofactor. The cofactor is Zn(2+).

The enzyme catalyses D-ribulose 5-phosphate = (2S)-2-hydroxy-3-oxobutyl phosphate + formate + H(+). The catalysed reaction is GTP + 4 H2O = 2,5-diamino-6-hydroxy-4-(5-phosphoribosylamino)-pyrimidine + formate + 2 phosphate + 3 H(+). It participates in cofactor biosynthesis; riboflavin biosynthesis; 2-hydroxy-3-oxobutyl phosphate from D-ribulose 5-phosphate: step 1/1. The protein operates within cofactor biosynthesis; riboflavin biosynthesis; 5-amino-6-(D-ribitylamino)uracil from GTP: step 1/4. Functionally, catalyzes the conversion of D-ribulose 5-phosphate to formate and 3,4-dihydroxy-2-butanone 4-phosphate. Catalyzes the conversion of GTP to 2,5-diamino-6-ribosylamino-4(3H)-pyrimidinone 5'-phosphate (DARP), formate and pyrophosphate. This is Riboflavin biosynthesis protein RibBA from Actinobacillus pleuropneumoniae serotype 3 (strain JL03).